The chain runs to 178 residues: Large ribosomal subunit protein uL5 (178 aa).

The protein belongs to the universal ribosomal protein uL5 family. As to quaternary structure, part of the 50S ribosomal subunit; part of the 5S rRNA/L5/L18/L25 subcomplex. Contacts the 5S rRNA and the P site tRNA. Forms a bridge to the 30S subunit in the 70S ribosome.

Functionally, this is one of the proteins that bind and probably mediate the attachment of the 5S RNA into the large ribosomal subunit, where it forms part of the central protuberance. In the 70S ribosome it contacts protein S13 of the 30S subunit (bridge B1b), connecting the 2 subunits; this bridge is implicated in subunit movement. Contacts the P site tRNA; the 5S rRNA and some of its associated proteins might help stabilize positioning of ribosome-bound tRNAs. This chain is Large ribosomal subunit protein uL5, found in Psychrobacter cryohalolentis (strain ATCC BAA-1226 / DSM 17306 / VKM B-2378 / K5).